A 330-amino-acid chain; its full sequence is tRNA-modifying protein YgfZ (330 aa).

Folate contacts are provided by tryptophan 28 and tryptophan 190.

It belongs to the tRNA-modifying YgfZ family.

The protein resides in the cytoplasm. Functionally, folate-binding protein involved in regulating the level of ATP-DnaA and in the modification of some tRNAs. It is probably a key factor in regulatory networks that act via tRNA modification, such as initiation of chromosomal replication. This is tRNA-modifying protein YgfZ from Yersinia pestis bv. Antiqua (strain Antiqua).